A 503-amino-acid polypeptide reads, in one-letter code: Transforming protein rel polyprotein (503 aa).

One can recognise an RHD domain in the interval 16–305; it reads PYIEIFEQPR…GNKAKRQRST (290 aa). A Phosphoserine; by host PKA modification is found at Ser275. Disordered stretches follow at residues 286–306 and 318–342; these read RYLP…RSTL and AVTE…KEPN. The Nuclear localization signal signature appears at 298–303; the sequence is KAKRQR.

The protein resides in the host cytoplasm. This transforming protein appears to have a protein-kinase activity. The polypeptide is Transforming protein rel polyprotein (V-REL) (Galliformes).